The sequence spans 491 residues: Cytochrome P450 2C40 (491 aa).

The signal sequence occupies residues 1–25 (MDPFVVLVLCLSFLLVLSLWRQRSA). Cys-435 contacts heme.

It belongs to the cytochrome P450 family. Heme serves as cofactor. In terms of tissue distribution, liver, brain, kidney, and intestine, with trace amounts in lung and heart. Expressed throughout the intestinal tract, with higher expression levels in jejunum, cecum and colon.

The protein resides in the endoplasmic reticulum membrane. The protein localises to the microsome membrane. The enzyme catalyses (5Z,8Z,11Z,14Z)-eicosatetraenoate + reduced [NADPH--hemoprotein reductase] + O2 = 16(R)-hydroxy-(5Z,8Z,11Z,14Z)-eicosatetraenoate + oxidized [NADPH--hemoprotein reductase] + H2O + H(+). The catalysed reaction is (5Z,8Z,11Z,14Z)-eicosatetraenoate + reduced [NADPH--hemoprotein reductase] + O2 = 16(S)-hydroxy-(5Z,8Z,11Z,14Z)-eicosatetraenoate + oxidized [NADPH--hemoprotein reductase] + H2O + H(+). It carries out the reaction (5Z,8Z,11Z,14Z)-eicosatetraenoate + reduced [NADPH--hemoprotein reductase] + O2 = (14R,15S)-epoxy-(5Z,8Z,11Z)-eicosatrienoate + oxidized [NADPH--hemoprotein reductase] + H2O + H(+). It catalyses the reaction (5Z,8Z,11Z,14Z)-eicosatetraenoate + reduced [NADPH--hemoprotein reductase] + O2 = (14S,15R)-epoxy-(5Z,8Z,11Z)-eicosatrienoate + oxidized [NADPH--hemoprotein reductase] + H2O + H(+). It functions in the pathway lipid metabolism; arachidonate metabolism. Functionally, a cytochrome P450 monooxygenase that may play a major role in the metabolism of arachidonic acid in the intestinal tract. Exhibits regioselective hydroxylase and epoxidase activity toward arachidonic acid, producing 16(R)-hydroxyeicosatetraenoic acid (HETE) and (14R,15S)-epoxyeicosatrienoic acid (EpETrE) as major products. Mechanistically, uses molecular oxygen inserting one oxygen atom into a substrate, and reducing the second into a water molecule, with two electrons provided by NADPH via cytochrome P450 reductase (CPR; NADPH-ferrihemoprotein reductase). This Mus musculus (Mouse) protein is Cytochrome P450 2C40.